A 289-amino-acid polypeptide reads, in one-letter code: Ribosomal protein L11 methyltransferase (289 aa).

S-adenosyl-L-methionine is bound by residues Thr135, Gly156, Asp179, and Asn225.

The protein belongs to the methyltransferase superfamily. PrmA family.

Its subcellular location is the cytoplasm. The catalysed reaction is L-lysyl-[protein] + 3 S-adenosyl-L-methionine = N(6),N(6),N(6)-trimethyl-L-lysyl-[protein] + 3 S-adenosyl-L-homocysteine + 3 H(+). Methylates ribosomal protein L11. The chain is Ribosomal protein L11 methyltransferase from Chlorobaculum tepidum (strain ATCC 49652 / DSM 12025 / NBRC 103806 / TLS) (Chlorobium tepidum).